The sequence spans 146 residues: MSLAAGREATLLAFDYGEKRIGVAVGNSLTKSARPLVIVQNRSREYRFEAVGKLIAEWKPNALVVGLPMHPDGTPHEMTQLAKRFGNQLNGRFNLPVTWIDERYSSVEAKAEIRAGNGRADMLDAEAASIILQQYLDGLSDDHEFH.

Belongs to the YqgF nuclease family.

The protein localises to the cytoplasm. Functionally, could be a nuclease involved in processing of the 5'-end of pre-16S rRNA. This chain is Putative pre-16S rRNA nuclease, found in Paraburkholderia xenovorans (strain LB400).